Here is a 554-residue protein sequence, read N- to C-terminus: Chaperonin GroEL (554 aa).

Residues 29–32 (TLGP), Lys-50, 86–90 (DGTTT), Gly-418, and Asp-499 each bind ATP. Residues 528-554 (HEEDNNTNRSGGGVGGGHHGGMGGMDF) form a disordered region. Residues 537 to 554 (SGGGVGGGHHGGMGGMDF) show a composition bias toward gly residues.

It belongs to the chaperonin (HSP60) family. Forms a cylinder of 14 subunits composed of two heptameric rings stacked back-to-back. Interacts with the co-chaperonin GroES.

Its subcellular location is the cytoplasm. The catalysed reaction is ATP + H2O + a folded polypeptide = ADP + phosphate + an unfolded polypeptide.. Together with its co-chaperonin GroES, plays an essential role in assisting protein folding. The GroEL-GroES system forms a nano-cage that allows encapsulation of the non-native substrate proteins and provides a physical environment optimized to promote and accelerate protein folding. This chain is Chaperonin GroEL, found in Orientia tsutsugamushi (strain Boryong) (Rickettsia tsutsugamushi).